Consider the following 268-residue polypeptide: NAD kinase (268 aa).

Catalysis depends on aspartate 45, which acts as the Proton acceptor. NAD(+) contacts are provided by residues 45 to 46, 122 to 123, arginine 148, aspartate 150, 161 to 166, alanine 185, and glutamine 223; these read DG, NE, and TAYGKS.

Belongs to the NAD kinase family. A divalent metal cation serves as cofactor.

It localises to the cytoplasm. The catalysed reaction is NAD(+) + ATP = ADP + NADP(+) + H(+). Functionally, involved in the regulation of the intracellular balance of NAD and NADP, and is a key enzyme in the biosynthesis of NADP. Catalyzes specifically the phosphorylation on 2'-hydroxyl of the adenosine moiety of NAD to yield NADP. The sequence is that of NAD kinase from Latilactobacillus sakei subsp. sakei (strain 23K) (Lactobacillus sakei subsp. sakei).